Here is a 375-residue protein sequence, read N- to C-terminus: Enoyl-[acyl-carrier-protein] reductase [NADH] 1, chloroplastic (375 aa).

The transit peptide at 1 to 67 (MGASAATGMQ…SSKRSGVAIR (67 aa)) directs the protein to the chloroplast. Residues Gly91, Tyr98, 155-156 (DA), 202-203 (SL), and Leu252 contribute to the NAD(+) site. Active-site proton acceptor residues include Tyr254 and Tyr264. NAD(+)-binding positions include Lys272 and 302-306 (LGSRA).

This sequence belongs to the short-chain dehydrogenases/reductases (SDR) family. FabI subfamily. Homotetramer.

The protein resides in the plastid. It localises to the chloroplast. The enzyme catalyses a 2,3-saturated acyl-[ACP] + NAD(+) = a (2E)-enoyl-[ACP] + NADH + H(+). The protein operates within lipid metabolism; fatty acid biosynthesis. Functionally, catalyzes the NAD-dependent reduction of a carbon-carbon double bond in an enoyl moiety that is covalently linked to an acyl carrier protein (ACP). Catalyzes the last reduction step in the de novo synthesis cycle of fatty acids. Involved in the elongation cycle of fatty acids which are used in lipid metabolism. Required for normal plant growth. The protein is Enoyl-[acyl-carrier-protein] reductase [NADH] 1, chloroplastic of Oryza sativa subsp. japonica (Rice).